The following is a 994-amino-acid chain: Protein translocase subunit SecA (994 aa).

Residues Gln-85, 103–107 (GEGKT), and Asp-492 contribute to the ATP site. Low complexity predominate over residues 868-888 (IPDGAGPVADAQPVRPAAARQ). Residues 868–994 (IPDGAGPVAD…HGDPARRNTE (127 aa)) are disordered. Over residues 889–900 (TPPPPSPVPSAP) the composition is skewed to pro residues. Zn(2+)-binding residues include Cys-973, Cys-975, Cys-984, and His-985. The segment covering 984-994 (CHGDPARRNTE) has biased composition (basic and acidic residues).

This sequence belongs to the SecA family. Monomer and homodimer. Part of the essential Sec protein translocation apparatus which comprises SecA, SecYEG and auxiliary proteins SecDF. Other proteins may also be involved. Requires Zn(2+) as cofactor.

Its subcellular location is the cell membrane. The protein localises to the cytoplasm. It catalyses the reaction ATP + H2O + cellular proteinSide 1 = ADP + phosphate + cellular proteinSide 2.. Its function is as follows. Part of the Sec protein translocase complex. Interacts with the SecYEG preprotein conducting channel. Has a central role in coupling the hydrolysis of ATP to the transfer of proteins into and across the cell membrane, serving as an ATP-driven molecular motor driving the stepwise translocation of polypeptide chains across the membrane. In Frankia casuarinae (strain DSM 45818 / CECT 9043 / HFP020203 / CcI3), this protein is Protein translocase subunit SecA.